We begin with the raw amino-acid sequence, 129 residues long: SOSS complex subunit C homolog (129 aa).

Residues 105 to 129 (RLEPLPSPATTPTTPNAPPSHNISK) form a disordered region.

The protein belongs to the SOSS-C family.

This is SOSS complex subunit C homolog from Drosophila erecta (Fruit fly).